The sequence spans 607 residues: MVNKSNSLDELLKQIKITEIIQHYGVKIQTKGNSLLALCPFHDDKNPSMSISSSKNIFKCWACNAAGNGIAFIQKHDQLDWKTALKKAIEICGIKLENWNSNLLTKVDPKQKRYWEINNALITYYQTRLKRETNPNGMNYLVEKRKLNKTLIEQFQLGLAFHNEDKYLCESMERYPFINPKIKPSELYLFSKTNQQGLGFFDFNTKKATFQNQIMIPIHDFNGNPVGFSARSVDNINKLKYKNSADHEFFKKGELLFNFHRLNKNLNQLFIVEGYFDVFTLTNSKFEAVALMGLALNDVQIKAIKAHFKELQTLVLALDNDASGQNAVFSLIEKLNNNNFIVEIVQWEHNYKDWDELYLNKGSEQVILQANKRQNLIEYLVSFFKKQQLDQRVITNKIIAFLTKNQTILNDHSFLIFLIKNLVKLLEYSDEKTLYETVLKHKEKLVSKFDNNRFYINTSGHAQPPQELQKTTAALVQTAFEEAVNELWKPEIFAFALIDKRFLVELKQSHLDEVFKECNFNLFDVELFIEKARIYWSENQTANWVGFESVLDQNYLLNNKARLLEIKDIFLDELTCYQANDFQNYLKTFQTLLKQQKQRLKNLKLTL.

The segment at 39–63 (CPFHDDKNPSMSISSSKNIFKCWAC) adopts a CHC2-type zinc-finger fold. Residues 267–350 (NQLFIVEGYF…IVEIVQWEHN (84 aa)) enclose the Toprim domain. 3 residues coordinate Mg(2+): glutamate 273, aspartate 319, and aspartate 321.

It belongs to the DnaG primase family. As to quaternary structure, monomer. Interacts with DnaB. Zn(2+) serves as cofactor. Mg(2+) is required as a cofactor.

The catalysed reaction is ssDNA + n NTP = ssDNA/pppN(pN)n-1 hybrid + (n-1) diphosphate.. RNA polymerase that catalyzes the synthesis of short RNA molecules used as primers for DNA polymerase during DNA replication. In Mycoplasma genitalium (strain ATCC 33530 / DSM 19775 / NCTC 10195 / G37) (Mycoplasmoides genitalium), this protein is DNA primase.